The primary structure comprises 276 residues: Secreted RxLR effector protein 150 (276 aa).

The N-terminal stretch at Met-1–Cys-18 is a signal peptide. The RxLR-dEER signature appears at Arg-49–Arg-64.

It belongs to the RxLR effector family.

It localises to the secreted. The protein resides in the host nucleus. The protein localises to the host cytoplasm. Secreted effector that partially suppresses the host cell death induced by cell death-inducing proteins. The chain is Secreted RxLR effector protein 150 from Plasmopara viticola (Downy mildew of grapevine).